The sequence spans 643 residues: E3 ubiquitin-protein ligase Praja-1 (643 aa).

A disordered region spans residues 1-363 (MGQESSKPVW…SDDYYKYCDE (363 aa)). Composition is skewed to basic and acidic residues over residues 95–105 (DYSRYPPREYR), 145–158 (KFKD…EKGA), and 173–183 (RDVREERDKLD). Low complexity predominate over residues 200–209 (QSSVASQSSS). A compositionally biased stretch (basic and acidic residues) spans 213 to 227 (LATKGDSSERERREQ). Ser-265 carries the phosphoserine modification. A Phosphothreonine modification is found at Thr-277. 2 stretches are compositionally biased toward basic and acidic residues: residues 289-310 (RWRD…RGRG) and 320-362 (KYPE…KYCD). Phosphoserine is present on residues Ser-365 and Ser-367. The interval 380-454 (RSREQTLSSS…REPSLQEEQA (75 aa)) is disordered. Residues 410–439 (SASTGTSPGPGASASAGAGAGASAGSNGSN) show a composition bias toward low complexity. An RING-type zinc finger spans residues 595-636 (CPICCSEYVKGEVATELPCHHYFHKPCVSIWLQKSGTCPVCR).

In terms of assembly, binds ubiquitin-conjugating enzymes (E2s). In vitro, interacts with the ubiquitin-conjugating enzyme, UBE2D2. Substrate for E2-dependent ubiquitination. In terms of tissue distribution, expressed in various regions of the brain including the cerebellum, cerebral cortex, medulla, occipital pole, frontal lobe, temporal lobe and putamen. Highest levels in the cerebral cortex.

The catalysed reaction is S-ubiquitinyl-[E2 ubiquitin-conjugating enzyme]-L-cysteine + [acceptor protein]-L-lysine = [E2 ubiquitin-conjugating enzyme]-L-cysteine + N(6)-ubiquitinyl-[acceptor protein]-L-lysine.. Its function is as follows. Has E2-dependent E3 ubiquitin-protein ligase activity. Ubiquitinates MAGED1 antigen leading to its subsequent degradation by proteasome. May be involved in protein sorting. The protein is E3 ubiquitin-protein ligase Praja-1 (PJA1) of Homo sapiens (Human).